A 1086-amino-acid chain; its full sequence is Bifunctional helicase and thymine dioxygenase JBP2 (1086 aa).

The interval 1–518 is thymine dioxygenase; that stretch reads MPVPSHVSVA…PPIYLPGRLL (518 aa). Positions 187–220 are disordered; sequence DESNRGVLFNSDSFGNGRGGSSISSSERSVDEND. Fe cation-binding residues include His393, Asp395, and His443. Arg457 is a binding site for 2-oxoglutarate. Residues 519–1084 form a DNA Helicase region; the sequence is EVLSPVQQAA…RHGDTVRSES (566 aa). The Helicase ATP-binding domain occupies 533–708; sequence VDRLSKGNGC…YRLIGWINSD (176 aa). Residue 546–553 participates in ATP binding; sequence LTMGLGKT. Positions 659–662 match the DEAH box motif; it reads DEGH. The 159-residue stretch at 883–1041 folds into the Helicase C-terminal domain; it reads VLISILHSIR…RAVPPEELLD (159 aa).

This sequence in the C-terminal section; belongs to the SNF2/RAD54 helicase family. It in the N-terminal section; belongs to the TET family. JBP2 subfamily. The cofactor is Fe(2+).

Its subcellular location is the nucleus. It carries out the reaction ATP + H2O = ADP + phosphate + H(+). It catalyses the reaction thymine + 2-oxoglutarate + O2 = 5-hydroxymethyluracil + succinate + CO2. Functionally, dioxygenase that catalyzes the first step of DNA base J (beta-d-glucosyl-HOMedU) biosynthesis by converting thymine to 5-hydroxymethyluracil (HOMedU). DNA base J is a hypermodified thymidine residue found in the genome of kinetoplastid parasites, which is localized primarily to repetitive DNA, namely the telomeres, and is implicated in the regulation of antigenic variation. Probably also acts as a DNA helicase. Recognizes and binds specific regions of the genome, hydrolyzes ATP and allows the DNA base J de novo synthesis. Involved in initial synthesis of DNA base J, JBP1 being able to act via the basal level of DNA base J and propagate further synthesis. In contrast to JBP1, it does not specifically bind DNA base J, however it binds chromatin. The chain is Bifunctional helicase and thymine dioxygenase JBP2 (JBP2) from Trypanosoma cruzi (strain CL Brener).